The chain runs to 77 residues: Large ribosomal subunit protein bL28 (77 aa).

The protein belongs to the bacterial ribosomal protein bL28 family.

The sequence is that of Large ribosomal subunit protein bL28 from Methylibium petroleiphilum (strain ATCC BAA-1232 / LMG 22953 / PM1).